A 316-amino-acid chain; its full sequence is Protein lifeguard 2 (316 aa).

Positions 1 to 53 (MTQGKLSVANKAPGTEGQQQVHGEKKEAPAVPSAPPSYEEATSGEGMKAGAFP) are disordered. The next 3 membrane-spanning stretches (helical) occupy residues 106-126 (VYTI…LFTF), 138-158 (PGWY…LACC), and 165-185 (FPWN…LTGM). Asn-191 is a glycosylation site (N-linked (GlcNAc...) asparagine). Transmembrane regions (helical) follow at residues 194 to 214 (SVLL…VFSF), 225 to 245 (GVLF…AILL), 250 to 270 (VPWL…LFLA), and 290 to 310 (IFGA…FLQL).

Belongs to the BI1 family. LFG subfamily. In terms of assembly, interacts with FAS/TNFRSF6 and BAX.

The protein resides in the cell membrane. Its subcellular location is the membrane raft. It localises to the postsynaptic cell membrane. Its function is as follows. Antiapoptotic protein which protects cells uniquely from Fas-induced apoptosis. Regulates Fas-mediated apoptosis in neurons by interfering with caspase-8 activation. Plays a role in cerebellar development by affecting cerebellar size, internal granular layer (IGL) thickness, and Purkinje cell (PC) development. This Pongo abelii (Sumatran orangutan) protein is Protein lifeguard 2 (FAIM2).